Reading from the N-terminus, the 100-residue chain is NADH-quinone oxidoreductase subunit K (100 aa).

3 helical membrane passes run 1–21 (MIGL…GLAG), 28–48 (ILLL…GFVA), and 64–84 (FIIA…ILWF).

It belongs to the complex I subunit 4L family. As to quaternary structure, NDH-1 is composed of 14 different subunits. Subunits NuoA, H, J, K, L, M, N constitute the membrane sector of the complex.

It is found in the cell inner membrane. It carries out the reaction a quinone + NADH + 5 H(+)(in) = a quinol + NAD(+) + 4 H(+)(out). In terms of biological role, NDH-1 shuttles electrons from NADH, via FMN and iron-sulfur (Fe-S) centers, to quinones in the respiratory chain. The immediate electron acceptor for the enzyme in this species is believed to be ubiquinone. Couples the redox reaction to proton translocation (for every two electrons transferred, four hydrogen ions are translocated across the cytoplasmic membrane), and thus conserves the redox energy in a proton gradient. The chain is NADH-quinone oxidoreductase subunit K from Helicobacter pylori (strain B38).